A 212-amino-acid polypeptide reads, in one-letter code: FMN-dependent NADH:quinone oxidoreductase (212 aa).

FMN contacts are provided by residues serine 9, 15–17, and 138–141; these read SVS and TRGG.

It belongs to the azoreductase type 1 family. As to quaternary structure, homodimer. It depends on FMN as a cofactor.

The catalysed reaction is 2 a quinone + NADH + H(+) = 2 a 1,4-benzosemiquinone + NAD(+). The enzyme catalyses N,N-dimethyl-1,4-phenylenediamine + anthranilate + 2 NAD(+) = 2-(4-dimethylaminophenyl)diazenylbenzoate + 2 NADH + 2 H(+). In terms of biological role, quinone reductase that provides resistance to thiol-specific stress caused by electrophilic quinones. Functionally, also exhibits azoreductase activity. Catalyzes the reductive cleavage of the azo bond in aromatic azo compounds to the corresponding amines. This chain is FMN-dependent NADH:quinone oxidoreductase, found in Delftia acidovorans (strain DSM 14801 / SPH-1).